The following is a 146-amino-acid chain: Large ribosomal subunit protein uL22 (146 aa).

This sequence belongs to the universal ribosomal protein uL22 family. As to quaternary structure, part of the 50S ribosomal subunit.

In terms of biological role, this protein binds specifically to 23S rRNA; its binding is stimulated by other ribosomal proteins, e.g. L4, L17, and L20. It is important during the early stages of 50S assembly. It makes multiple contacts with different domains of the 23S rRNA in the assembled 50S subunit and ribosome. The globular domain of the protein is located near the polypeptide exit tunnel on the outside of the subunit, while an extended beta-hairpin is found that lines the wall of the exit tunnel in the center of the 70S ribosome. This chain is Large ribosomal subunit protein uL22, found in Nocardioides sp. (strain ATCC BAA-499 / JS614).